The chain runs to 198 residues: GTP cyclohydrolase-2 (198 aa).

49–53 (RVHSE) contacts GTP. Residues C54, C65, and C67 each coordinate Zn(2+). Residues Q70, 92–94 (EGR), and T114 each bind GTP. Catalysis depends on D126, which acts as the Proton acceptor. Residue R128 is the Nucleophile of the active site. 2 residues coordinate GTP: T149 and K154.

It belongs to the GTP cyclohydrolase II family. As to quaternary structure, homodimer. Zn(2+) is required as a cofactor.

It carries out the reaction GTP + 4 H2O = 2,5-diamino-6-hydroxy-4-(5-phosphoribosylamino)-pyrimidine + formate + 2 phosphate + 3 H(+). It functions in the pathway cofactor biosynthesis; riboflavin biosynthesis; 5-amino-6-(D-ribitylamino)uracil from GTP: step 1/4. Catalyzes the conversion of GTP to 2,5-diamino-6-ribosylamino-4(3H)-pyrimidinone 5'-phosphate (DARP), formate and pyrophosphate. The polypeptide is GTP cyclohydrolase-2 (Escherichia fergusonii (strain ATCC 35469 / DSM 13698 / CCUG 18766 / IAM 14443 / JCM 21226 / LMG 7866 / NBRC 102419 / NCTC 12128 / CDC 0568-73)).